The primary structure comprises 184 residues: uncharacterized protein (184 aa).

Residues 32 to 52 (PCPRSRTQGQSRRSETHTISR) are disordered.

It is found in the mitochondrion. This is an uncharacterized protein from Arabidopsis thaliana (Mouse-ear cress).